Consider the following 954-residue polypeptide: Valine--tRNA ligase (954 aa).

A 'HIGH' region motif is present at residues 48–58; it reads PNVTGSLHMGH. The short motif at 560-564 is the 'KMSKS' region element; that stretch reads KMSKS. K563 lines the ATP pocket. Residues 883-954 are a coiled coil; it reads AGFINKEAEL…QTQYQAIENL (72 aa).

It belongs to the class-I aminoacyl-tRNA synthetase family. ValS type 1 subfamily. As to quaternary structure, monomer.

It localises to the cytoplasm. The catalysed reaction is tRNA(Val) + L-valine + ATP = L-valyl-tRNA(Val) + AMP + diphosphate. Its function is as follows. Catalyzes the attachment of valine to tRNA(Val). As ValRS can inadvertently accommodate and process structurally similar amino acids such as threonine, to avoid such errors, it has a 'posttransfer' editing activity that hydrolyzes mischarged Thr-tRNA(Val) in a tRNA-dependent manner. The polypeptide is Valine--tRNA ligase (Actinobacillus pleuropneumoniae serotype 3 (strain JL03)).